Reading from the N-terminus, the 836-residue chain is Ethylene receptor 3 (836 aa).

The next 3 membrane-spanning stretches (helical) occupy residues 137 to 157, 166 to 186, and 204 to 224; these read LIAA…AGLR, LVQF…TAFT, and LTAL…PQLL. Residues cysteine 176 and histidine 180 each coordinate Cu cation. The region spanning 269-413 is the GAF domain; sequence DRHTVLYTTL…VVAGQVAVAL (145 aa). Residues 416-452 are a coiled coil; sequence ATLLEESRAMRDRLAEQNRELLQARRDALMANEARQA. A Histidine kinase domain is found at 457–691; the sequence is MSQGMRRPIH…LVLRFQLQSP (235 aa). Residues 718–834 form the Response regulatory domain; that stretch reads LLIDDDDDIN…LKDELARILQ (117 aa).

The protein belongs to the ethylene receptor family. Cu cation is required as a cofactor.

It localises to the endoplasmic reticulum membrane. It catalyses the reaction ATP + protein L-histidine = ADP + protein N-phospho-L-histidine.. Its function is as follows. Ethylene receptor related to bacterial two-component regulators. Acts as a negative regulator of ethylene signaling. May delay the transition from the vegetative stage to the floral stage by up-regulating GI (GIGANTEA) and RCN1 and cause starch accumulation in stems by down-regulating the alpha-amylase AMY3D. The sequence is that of Ethylene receptor 3 (ETR3) from Oryza sativa subsp. japonica (Rice).